A 606-amino-acid polypeptide reads, in one-letter code: RUN and FYVE domain-containing protein 2 (606 aa).

One can recognise an RUN domain in the interval 37-169 (DSDYPPLQQF…IDANLCVKGE (133 aa)). A coiled-coil region spans residues 210–534 (EELNRQLNST…IKEANKALQG (325 aa)). The FYVE-type zinc finger occupies 540–598 (DKEATHCKLCEKEFSLSKRKHHCRNCGEIFCNACSDNELPLPSSPKPVRVCDSCHALLI). Zn(2+) contacts are provided by Cys546, Cys549, Cys562, Cys565, Cys570, Cys573, Cys590, and Cys593.

As to quaternary structure, interacts with BMX.

The protein localises to the nucleus. This Pongo abelii (Sumatran orangutan) protein is RUN and FYVE domain-containing protein 2 (RUFY2).